We begin with the raw amino-acid sequence, 360 residues long: DNA polymerase IV (360 aa).

Residues 8-189 (IIHVDMDCFF…LPLEKIPGVG (182 aa)) form the UmuC domain. The Mg(2+) site is built by Asp-12 and Asp-107. Glu-108 is a catalytic residue.

Belongs to the DNA polymerase type-Y family. In terms of assembly, monomer. Requires Mg(2+) as cofactor.

It localises to the cytoplasm. It carries out the reaction DNA(n) + a 2'-deoxyribonucleoside 5'-triphosphate = DNA(n+1) + diphosphate. Its function is as follows. Poorly processive, error-prone DNA polymerase involved in untargeted mutagenesis. Copies undamaged DNA at stalled replication forks, which arise in vivo from mismatched or misaligned primer ends. These misaligned primers can be extended by PolIV. Exhibits no 3'-5' exonuclease (proofreading) activity. May be involved in translesional synthesis, in conjunction with the beta clamp from PolIII. The polypeptide is DNA polymerase IV (Vibrio cholerae serotype O1 (strain ATCC 39315 / El Tor Inaba N16961)).